A 114-amino-acid chain; its full sequence is V-type proton ATPase subunit G (114 aa).

N-acetylserine is present on Ser2.

The protein belongs to the V-ATPase G subunit family. In terms of assembly, V-ATPase is a heteromultimeric enzyme composed of a peripheral catalytic V1 complex (components A to H) attached to an integral membrane V0 proton pore complex (components: a, c, c', c'', d, e, f and VOA1).

The protein localises to the vacuole membrane. Functionally, subunit of the V1 complex of vacuolar(H+)-ATPase (V-ATPase), a multisubunit enzyme composed of a peripheral complex (V1) that hydrolyzes ATP and a membrane integral complex (V0) that translocates protons. V-ATPase is responsible for acidifying and maintaining the pH of intracellular compartments. This chain is V-type proton ATPase subunit G, found in Saccharomyces cerevisiae (strain ATCC 204508 / S288c) (Baker's yeast).